Reading from the N-terminus, the 208-residue chain is Small ribosomal subunit protein eS8 (208 aa).

Belongs to the eukaryotic ribosomal protein eS8 family. Component of the small ribosomal subunit. Identified in a IGF2BP1-dependent mRNP granule complex containing untranslated mRNAs. Part of the small subunit (SSU) processome, composed of more than 70 proteins and the RNA chaperone small nucleolar RNA (snoRNA) U3.

The protein resides in the cytoplasm. Its subcellular location is the membrane. The protein localises to the nucleus. It is found in the nucleolus. Functionally, component of the small ribosomal subunit. The ribosome is a large ribonucleoprotein complex responsible for the synthesis of proteins in the cell. Part of the small subunit (SSU) processome, first precursor of the small eukaryotic ribosomal subunit. During the assembly of the SSU processome in the nucleolus, many ribosome biogenesis factors, an RNA chaperone and ribosomal proteins associate with the nascent pre-rRNA and work in concert to generate RNA folding, modifications, rearrangements and cleavage as well as targeted degradation of pre-ribosomal RNA by the RNA exosome. In Caenorhabditis elegans, this protein is Small ribosomal subunit protein eS8 (rps-8).